The following is a 251-amino-acid chain: Flap endonuclease Xni (251 aa).

Asp-104 is a Mg(2+) binding site. Positions 160–249 (VQPQQLPDYW…IDGNLQQLRL (90 aa)) constitute a 5'-3' exonuclease domain. K(+) is bound by residues Leu-171, Ala-172, Pro-180, Val-182, and Ile-185. The segment at 184 to 189 (GIGPKS) is interaction with DNA.

Belongs to the Xni family. It depends on Mg(2+) as a cofactor. K(+) is required as a cofactor.

Has flap endonuclease activity. During DNA replication, flap endonucleases cleave the 5'-overhanging flap structure that is generated by displacement synthesis when DNA polymerase encounters the 5'-end of a downstream Okazaki fragment. The polypeptide is Flap endonuclease Xni (Shigella flexneri serotype 5b (strain 8401)).